A 205-amino-acid chain; its full sequence is Large ribosomal subunit protein uL18 (205 aa).

Belongs to the universal ribosomal protein uL18 family. As to quaternary structure, part of the 50S ribosomal subunit. Contacts the 5S and 23S rRNAs.

Its function is as follows. This is one of the proteins that bind and probably mediate the attachment of the 5S RNA into the large ribosomal subunit, where it forms part of the central protuberance. This chain is Large ribosomal subunit protein uL18, found in Pyrobaculum aerophilum (strain ATCC 51768 / DSM 7523 / JCM 9630 / CIP 104966 / NBRC 100827 / IM2).